The primary structure comprises 196 residues: Venom platylysin (196 aa).

This sequence belongs to the redulysin-like family. In terms of tissue distribution, expressed by the venom gland.

The protein localises to the secreted. Its function is as follows. Probable insecticidal toxin that has been detected in a semi-pure insecticidal fraction. The chain is Venom platylysin from Platymeris biguttatus (Two-spotted assassin bug).